Here is a 229-residue protein sequence, read N- to C-terminus: 5'-methylthioadenosine/S-adenosylhomocysteine nucleosidase (229 aa).

Catalysis depends on Glu12, which acts as the Proton acceptor. Substrate is bound by residues Gly78, Ile152, and 173–174 (ME). Asp197 acts as the Proton donor in catalysis.

The protein belongs to the PNP/UDP phosphorylase family. MtnN subfamily.

The catalysed reaction is S-adenosyl-L-homocysteine + H2O = S-(5-deoxy-D-ribos-5-yl)-L-homocysteine + adenine. It carries out the reaction S-methyl-5'-thioadenosine + H2O = 5-(methylsulfanyl)-D-ribose + adenine. The enzyme catalyses 5'-deoxyadenosine + H2O = 5-deoxy-D-ribose + adenine. It participates in amino-acid biosynthesis; L-methionine biosynthesis via salvage pathway; S-methyl-5-thio-alpha-D-ribose 1-phosphate from S-methyl-5'-thioadenosine (hydrolase route): step 1/2. Catalyzes the irreversible cleavage of the glycosidic bond in both 5'-methylthioadenosine (MTA) and S-adenosylhomocysteine (SAH/AdoHcy) to adenine and the corresponding thioribose, 5'-methylthioribose and S-ribosylhomocysteine, respectively. Also cleaves 5'-deoxyadenosine, a toxic by-product of radical S-adenosylmethionine (SAM) enzymes, into 5-deoxyribose and adenine. The sequence is that of 5'-methylthioadenosine/S-adenosylhomocysteine nucleosidase from Histophilus somni (strain 129Pt) (Haemophilus somnus).